The sequence spans 784 residues: Lon protease (784 aa).

In terms of domain architecture, Lon N-terminal spans 11-204; that stretch reads IPVLPLRDVV…YLMAMMESEI (194 aa). 356–363 provides a ligand contact to ATP; the sequence is GPPGVGKT. Residues 592–773 enclose the Lon proteolytic domain; the sequence is ENRVGQVTGL…EEVLTLALQN (182 aa). Catalysis depends on residues Ser679 and Lys722.

This sequence belongs to the peptidase S16 family. In terms of assembly, homohexamer. Organized in a ring with a central cavity. ATP binding and hydrolysis do not affect the oligomeric state of the enzyme.

It localises to the cytoplasm. It carries out the reaction Hydrolysis of proteins in presence of ATP.. Its activity is regulated as follows. Contains an allosteric site (distinct from its active site), whose occupancy by an unfolded polypeptide leads to enzyme activation. Its function is as follows. ATP-dependent serine protease that mediates the selective degradation of mutant and abnormal proteins as well as certain short-lived regulatory proteins. Required for cellular homeostasis and for survival from DNA damage and developmental changes induced by stress. Degrades polypeptides processively to yield small peptide fragments that are 5 to 10 amino acids long. Binds to DNA in a double-stranded, site-specific manner. Endogenous substrates include the regulatory proteins RcsA and SulA, the transcriptional activator SoxS, and UmuD. Its overproduction specifically inhibits translation through at least two different pathways, one of them being the YoeB-YefM toxin-antitoxin system. This Escherichia coli O6:H1 (strain CFT073 / ATCC 700928 / UPEC) protein is Lon protease.